The following is a 468-amino-acid chain: UDP-N-acetylmuramate--L-alanine ligase (468 aa).

Gly112–Thr118 contacts ATP.

The protein belongs to the MurCDEF family.

Its subcellular location is the cytoplasm. The catalysed reaction is UDP-N-acetyl-alpha-D-muramate + L-alanine + ATP = UDP-N-acetyl-alpha-D-muramoyl-L-alanine + ADP + phosphate + H(+). The protein operates within cell wall biogenesis; peptidoglycan biosynthesis. Its function is as follows. Cell wall formation. The protein is UDP-N-acetylmuramate--L-alanine ligase of Bordetella bronchiseptica (strain ATCC BAA-588 / NCTC 13252 / RB50) (Alcaligenes bronchisepticus).